The chain runs to 375 residues: D-aspartate oxidase (375 aa).

A signal peptide spans Met1 to Ala17. Residues Ser9, Leu12, Asp34, Ser51, and Gly55 each coordinate FAD. N-linked (GlcNAc...) asparagine glycosylation is present at Asn203. Positions 322, 354, and 355 each coordinate FAD.

This sequence belongs to the DAMOX/DASOX family. The cofactor is FAD.

The catalysed reaction is D-aspartate + O2 + H2O = oxaloacetate + H2O2 + NH4(+). The enzyme catalyses D-glutamate + O2 + H2O = H2O2 + 2-oxoglutarate + NH4(+). Its function is as follows. Selectively catalyzes the oxidative deamination of acidic amino acids. Protects the organism from the toxicity of D-amino acids. Enables the organism to utilize D-amino acids as a source of nutrients. Enables the organism to utilize D-aspartate as a nitrogen source. This is D-aspartate oxidase (DDO) from Komagataella phaffii (strain GS115 / ATCC 20864) (Yeast).